A 368-amino-acid chain; its full sequence is Aminomethyltransferase (368 aa).

This sequence belongs to the GcvT family. As to quaternary structure, the glycine cleavage system is composed of four proteins: P, T, L and H.

The catalysed reaction is N(6)-[(R)-S(8)-aminomethyldihydrolipoyl]-L-lysyl-[protein] + (6S)-5,6,7,8-tetrahydrofolate = N(6)-[(R)-dihydrolipoyl]-L-lysyl-[protein] + (6R)-5,10-methylene-5,6,7,8-tetrahydrofolate + NH4(+). The glycine cleavage system catalyzes the degradation of glycine. In Xylella fastidiosa (strain M23), this protein is Aminomethyltransferase.